A 228-amino-acid polypeptide reads, in one-letter code: DNA mismatch repair protein MutH (228 aa).

Belongs to the MutH family.

Its subcellular location is the cytoplasm. Sequence-specific endonuclease that cleaves unmethylated GATC sequences. It is involved in DNA mismatch repair. This is DNA mismatch repair protein MutH from Yersinia enterocolitica serotype O:8 / biotype 1B (strain NCTC 13174 / 8081).